Here is a 440-residue protein sequence, read N- to C-terminus: Ferredoxin--NADP reductase (440 aa).

Residues 17 to 75 form the CpcD-like domain; it reads SRVFVYEVVGMRQNEETDQTNYPIRKSGSVFIRVPYNRMNQEMQRITRLGGKIVTIQTV. Positions 99 to 142 are disordered; sequence KSEGNGKATPVKTDSGAKAFAKPPAEEQLKKKDNKGNTMTQAKA. The segment covering 122-133 has biased composition (basic and acidic residues); that stretch reads PAEEQLKKKDNK. The region spanning 155 to 279 is the FAD-binding FR-type domain; sequence NAPFIGKVIS…TGPVGKEMLL (125 aa). FAD-binding positions include 214–217, 235–237, Tyr-241, 253–255, and Thr-294; these read RLYS, CVR, and VCS. NADP(+) contacts are provided by Ser-217 and Arg-237. Residues Thr-294, 330–331, 360–361, 370–374, 399–400, and Glu-438 each bind NADP(+); these read VP, SR, RMYIQ, and GL.

It belongs to the ferredoxin--NADP reductase type 1 family. It depends on FAD as a cofactor.

It is found in the cellular thylakoid membrane. It carries out the reaction 2 reduced [2Fe-2S]-[ferredoxin] + NADP(+) + H(+) = 2 oxidized [2Fe-2S]-[ferredoxin] + NADPH. This is Ferredoxin--NADP reductase (petH) from Nostoc sp. (strain ATCC 29151 / PCC 7119) (Anabaena sp.).